Consider the following 73-residue polypeptide: DNA-directed RNA polymerase subunit omega (73 aa).

Belongs to the RNA polymerase subunit omega family. In terms of assembly, the RNAP catalytic core consists of 2 alpha, 1 beta, 1 beta' and 1 omega subunit. When a sigma factor is associated with the core the holoenzyme is formed, which can initiate transcription.

It carries out the reaction RNA(n) + a ribonucleoside 5'-triphosphate = RNA(n+1) + diphosphate. Its function is as follows. Promotes RNA polymerase assembly. Latches the N- and C-terminal regions of the beta' subunit thereby facilitating its interaction with the beta and alpha subunits. The protein is DNA-directed RNA polymerase subunit omega of Maridesulfovibrio salexigens (strain ATCC 14822 / DSM 2638 / NCIMB 8403 / VKM B-1763) (Desulfovibrio salexigens).